A 109-amino-acid polypeptide reads, in one-letter code: MAAGVVFLALSAQLLQARLMKEESPVVSWRLEPEDGTALDVHFVSTLEPLSNAVKRNVPRCIIILVLQEPTAFRISVTSSCFVQNTLTKLLKDRRKMQTVQCATARETS.

An N-terminal signal peptide occupies residues 1–17 (MAAGVVFLALSAQLLQA).

This sequence belongs to the BAGE family. In terms of tissue distribution, not expressed in normal tissues except in testis. Expressed in 22% of melanomas, in bladder and lung carcinomas.

The protein localises to the secreted. Functionally, unknown. Candidate gene encoding tumor antigens. This Homo sapiens (Human) protein is B melanoma antigen 2 (BAGE2).